The following is a 475-amino-acid chain: MDILNDISIAAPEALLIGVALIGVLLGATFKQSFNGLSRLLGALALAGAAFLAASQSAVDASTAFNGLYKVTPFIAIAKAVSYGVGAIALLVAGGYLHRENMNKFEYTLLVMFGSAGMGVMLSANNLMTLYMGIETLSLSSYVLAAFNRDSRRSAEAGLKYFVLGALASGLLLFGCSLVYGYTGFASFEQIAAADQSIGLTFGLVLILMALSFKASAAPFHVWTPDVYEGAPTPVVTFFSTAPKLATVAVLANIMFTVFGVYEESWMLIIAIVSAISMLVGAFGGLAQNNIKRLLAYSSIANVGYALMGVAAGEVNGAASVLTYMTIYVITTLGMFGIVLAMRRRDGQVEEISDLNGLSTSRPGLAVAMTVLVFSVAGIPPMAGFLGKWVVFEAALKSELYWLVAVGVIGSVVSLGYYLRLIWAMWAKTSDEEALEPADGMVSVSIYGATILAFPVLVIWIGWMTGIIGTAAAAG.

14 helical membrane passes run 7–27, 40–60, 74–94, 105–125, 127–147, 161–181, 191–211, 242–262, 266–286, 295–315, 321–341, 365–385, 399–419, and 448–468; these read ISIAAPEALLIGVALIGVLLG, LLGALALAGAAFLAASQSAVD, FIAIAKAVSYGVGAIALLVAG, FEYTLLVMFGSAGMGVMLSAN, LMTLYMGIETLSLSSYVLAAF, YFVLGALASGLLLFGCSLVYG, IAAADQSIGLTFGLVLILMAL, APKLATVAVLANIMFTVFGVY, WMLIIAIVSAISMLVGAFGGL, LAYSSIANVGYALMGVAAGEV, VLTYMTIYVITTLGMFGIVLA, LAVAMTVLVFSVAGIPPMAGF, ELYWLVAVGVIGSVVSLGYYL, and GATILAFPVLVIWIGWMTGII.

This sequence belongs to the complex I subunit 2 family. As to quaternary structure, NDH-1 is composed of 14 different subunits. Subunits NuoA, H, J, K, L, M, N constitute the membrane sector of the complex.

The protein resides in the cell inner membrane. The catalysed reaction is a quinone + NADH + 5 H(+)(in) = a quinol + NAD(+) + 4 H(+)(out). In terms of biological role, NDH-1 shuttles electrons from NADH, via FMN and iron-sulfur (Fe-S) centers, to quinones in the respiratory chain. The immediate electron acceptor for the enzyme in this species is believed to be ubiquinone. Couples the redox reaction to proton translocation (for every two electrons transferred, four hydrogen ions are translocated across the cytoplasmic membrane), and thus conserves the redox energy in a proton gradient. This is NADH-quinone oxidoreductase subunit N from Hirschia baltica (strain ATCC 49814 / DSM 5838 / IFAM 1418).